We begin with the raw amino-acid sequence, 412 residues long: MAEVSSKELYKFKKTLKELSEKKGRGTELVSVYIPHDKQISDVGKQMRDELGQSANIKSKQTRKNVQSAIEVIMQRIRLFKAAPENGLVLFVGMIPRGGPGTEKMETYVFEPPEPITTYWYQCNNEFFLEPLEYMIEERETYGLAVIDRKEATIATLRGKKVNILNHLTSGVPGKHKAGGQSQRRFDRVIDLAAHEFKKRIGEHMNEDFLALEELEGVIIGGPGFTKEEFVKGDYLNYEIKDKIIATVDTSYTGEFGIREVIDKSADILNDLDVMQEKKVVQKFLHELVKDKGLASYGEREVRTNLIMGAVDTLLLSEDLTAMRKVFKCPSCGNEEEITVKSQSEADKLEKPCSNCGEILKEESSQTLIEDFVEKAEEMNSEVELISTETEEGMQLLRAFGGVAAILRYHVG.

The protein belongs to the eukaryotic release factor 1 family. As to quaternary structure, heterodimer of two subunits, one of which binds GTP.

The protein resides in the cytoplasm. Its function is as follows. Directs the termination of nascent peptide synthesis (translation) in response to the termination codons UAA, UAG and UGA. This is Peptide chain release factor subunit 1 from Methanobrevibacter smithii (strain ATCC 35061 / DSM 861 / OCM 144 / PS).